The following is a 322-amino-acid chain: Transcription cofactor vestigial-like protein 2 (322 aa).

Over residues 42–61 (ASPGSSASGSSSFSNPTPAS) the composition is skewed to low complexity. Disordered regions lie at residues 42-75 (ASPG…ERPP) and 248-322 (PGRL…PTLG). Residues 62–75 (VKEEEGSPEKERPP) are compositionally biased toward basic and acidic residues. 2 stretches are compositionally biased toward low complexity: residues 248–258 (PGRLAPASAPA) and 270–283 (GEPA…PGGP). Over residues 312 to 322 (SAPPALYPTLG) the composition is skewed to pro residues.

This sequence belongs to the vestigial family. In terms of assembly, interacts with TEFs. Binds to TEAD1/TEF1. As to expression, skeletal muscle specific.

The protein localises to the nucleus. In terms of biological role, may act as a specific coactivator for the mammalian TEFs. May play a role in the development of skeletal muscles. The chain is Transcription cofactor vestigial-like protein 2 (Vgll2) from Mus musculus (Mouse).